Consider the following 180-residue polypeptide: Nucleoside triphosphate/diphosphate phosphatase (180 aa).

Arg26 functions as the Proton donor in the catalytic mechanism. Mg(2+) is bound by residues Asn90, Asp106, Asp108, Asp110, Asp123, and Glu126.

Belongs to the Ntdp family. Mg(2+) is required as a cofactor.

The catalysed reaction is a ribonucleoside 5'-triphosphate + H2O = a ribonucleoside 5'-diphosphate + phosphate + H(+). It catalyses the reaction a ribonucleoside 5'-diphosphate + H2O = a ribonucleoside 5'-phosphate + phosphate + H(+). Functionally, has nucleoside phosphatase activity towards nucleoside triphosphates and nucleoside diphosphates. In Staphylococcus aureus (strain Mu3 / ATCC 700698), this protein is Nucleoside triphosphate/diphosphate phosphatase.